The following is a 239-amino-acid chain: Tryptophan synthase alpha chain (239 aa).

Residues Glu34 and Asp45 each act as proton acceptor in the active site.

The protein belongs to the TrpA family. In terms of assembly, tetramer of two alpha and two beta chains.

It carries out the reaction (1S,2R)-1-C-(indol-3-yl)glycerol 3-phosphate + L-serine = D-glyceraldehyde 3-phosphate + L-tryptophan + H2O. The protein operates within amino-acid biosynthesis; L-tryptophan biosynthesis; L-tryptophan from chorismate: step 5/5. Functionally, the alpha subunit is responsible for the aldol cleavage of indoleglycerol phosphate to indole and glyceraldehyde 3-phosphate. The protein is Tryptophan synthase alpha chain of Thermotoga petrophila (strain ATCC BAA-488 / DSM 13995 / JCM 10881 / RKU-1).